Here is a 198-residue protein sequence, read N- to C-terminus: IMP cyclohydrolase (198 aa).

This sequence belongs to the archaeal IMP cyclohydrolase family.

The enzyme catalyses IMP + H2O = 5-formamido-1-(5-phospho-D-ribosyl)imidazole-4-carboxamide. It participates in purine metabolism; IMP biosynthesis via de novo pathway; IMP from 5-formamido-1-(5-phospho-D-ribosyl)imidazole-4-carboxamide: step 1/1. Catalyzes the cyclization of 5-formylamidoimidazole-4-carboxamide ribonucleotide to IMP. This Thermococcus kodakarensis (strain ATCC BAA-918 / JCM 12380 / KOD1) (Pyrococcus kodakaraensis (strain KOD1)) protein is IMP cyclohydrolase.